Here is a 232-residue protein sequence, read N- to C-terminus: Phosphoribosylformylglycinamidine synthase subunit PurQ (232 aa).

The Glutamine amidotransferase type-1 domain maps to 2–232 (KIAIIQFGGT…SMADYITENF (231 aa)). Residue cysteine 86 is the Nucleophile of the active site. Active-site residues include histidine 203 and glutamate 205.

In terms of assembly, part of the FGAM synthase complex composed of 1 PurL, 1 PurQ and 2 PurS subunits.

The protein localises to the cytoplasm. The catalysed reaction is N(2)-formyl-N(1)-(5-phospho-beta-D-ribosyl)glycinamide + L-glutamine + ATP + H2O = 2-formamido-N(1)-(5-O-phospho-beta-D-ribosyl)acetamidine + L-glutamate + ADP + phosphate + H(+). The enzyme catalyses L-glutamine + H2O = L-glutamate + NH4(+). Its pathway is purine metabolism; IMP biosynthesis via de novo pathway; 5-amino-1-(5-phospho-D-ribosyl)imidazole from N(2)-formyl-N(1)-(5-phospho-D-ribosyl)glycinamide: step 1/2. Its function is as follows. Part of the phosphoribosylformylglycinamidine synthase complex involved in the purines biosynthetic pathway. Catalyzes the ATP-dependent conversion of formylglycinamide ribonucleotide (FGAR) and glutamine to yield formylglycinamidine ribonucleotide (FGAM) and glutamate. The FGAM synthase complex is composed of three subunits. PurQ produces an ammonia molecule by converting glutamine to glutamate. PurL transfers the ammonia molecule to FGAR to form FGAM in an ATP-dependent manner. PurS interacts with PurQ and PurL and is thought to assist in the transfer of the ammonia molecule from PurQ to PurL. The protein is Phosphoribosylformylglycinamidine synthase subunit PurQ of Methanosarcina mazei (strain ATCC BAA-159 / DSM 3647 / Goe1 / Go1 / JCM 11833 / OCM 88) (Methanosarcina frisia).